Reading from the N-terminus, the 512-residue chain is Cytochrome P450 monooxygenase poxM (512 aa).

A helical transmembrane segment spans residues Leu15–Ile35. Cys449 serves as a coordination point for heme.

Belongs to the cytochrome P450 family. The cofactor is heme.

Its subcellular location is the membrane. Its pathway is secondary metabolite biosynthesis. Cytochrome P450 monooxygenase; part of the gene cluster that mediates the biosynthesis of oxaleimides, cytotoxic compounds containing an unusual disubstituted succinimide moiety. The first step of the pathway is provided by the HR-PKS poxF that serves in a new mode of collaborative biosynthesis with the PKS-NRPS poxE, by providing the olefin containing amino acid substrate via the synthesis of an ACP-bound dec-4-enoate. The cytochrome P450 monooxygenase poxM-catalyzed oxidation at the alpha-position creates the enzyme-bound 2-hydroxydec-4-enoyl-ACP thioester, which may be prone to spontaneous hydrolysis to yield 2-hydroxydec-4-enoic acid due to increased electrophilicity of the carbonyl. 2-hydroxydec-4-enoic acid can then be further oxidized by poxM to yield the alpha-ketoacid 2-oxodec-4-enoicacid, which is reductively aminated by the aminotransferase poxL to yield (S,E)-2-aminodec-4-enoic acid. The Hybrid PKS-NRPS synthetase poxE then performs condensation between the octaketide product of its PKS modules and the amino group of (S,E)-2-aminodec-4-enoic acid which is activated and incorporated by the adenylation domain. The resulting aminoacyl product can be cyclized by the Diels-Alderase PoxQ and reductively released by the reductive (R) domain of poxE to yield an aldehyde intermediate. The released aldehyde is then substrate for a Knoevenagel condensation by the hydrolyase poxO followed by an oxidation at the 5-position of the pyrrolidone ring. The presence of the olefin from the amino acid building block allows for migration of the substituted allyl group to occur. This allylic transposition reaction takes place in a conjugate addition, semipinacol-like fashion to yield a succinimide intermediate. Iterative two-electron oxidations of the C7 methyl of the succinimide intermediate to the carboxylic acid can be catalyzed by one of two remaining cytochrome P450 monooxygenasess poxC or poxD to yield oxaleimide A. Subsequent oxidation yields the maleimide scaffold oxaleimide I. Both oxaleimide A and oxaleimide I can undergo oxidative modifications in the decalin ring to yield the series of products oxaleimides B to H. The chain is Cytochrome P450 monooxygenase poxM from Penicillium oxalicum (strain 114-2 / CGMCC 5302) (Penicillium decumbens).